A 135-amino-acid polypeptide reads, in one-letter code: Cytochrome b5 (135 aa).

The Cytochrome b5 heme-binding domain maps to 4-80 (SKVYSLAEVS…MDEMCVGDID (77 aa)). Heme is bound by residues His-39 and His-63. A helical membrane pass occupies residues 106–126 (FIIKLLQFLVPLIILGVAVGI).

It belongs to the cytochrome b5 family.

Its subcellular location is the endoplasmic reticulum membrane. It localises to the microsome membrane. Membrane bound hemoprotein which function as an electron carrier for several membrane bound oxygenases. The chain is Cytochrome b5 from Cuscuta reflexa (Southern Asian dodder).